Reading from the N-terminus, the 804-residue chain is Ribonucleoside-diphosphate reductase large subunit-like protein (804 aa).

The protein belongs to the ribonucleoside diphosphate reductase large chain family. As to quaternary structure, the genome of human herpesvirus-6 does not code for a ribonucleotide reductase small subunit.

The protein localises to the virion. Its subcellular location is the host cytoplasm. Functionally, does not possess a ribonucleotide reductase activity. Betaherpesviruses probably use another strategy to expand the dNTP pool in a quiescent host cell. The polypeptide is Ribonucleoside-diphosphate reductase large subunit-like protein (Human herpesvirus 6B (strain Z29) (HHV-6 variant B)).